A 299-amino-acid chain; its full sequence is Lathosterol oxidase (299 aa).

The next 3 membrane-spanning stretches (helical) occupy residues 32-52 (ISLL…CATL), 79-99 (FTVK…LLEL), and 117-137 (IHLM…IYWI). Residues 124-252 (VSFLFFTDML…YFTLWDRIGG (129 aa)) enclose the Fatty acid hydroxylase domain. Residues 138–143 (HRGLHH) carry the Histidine box-1 motif. Positions 151–155 (HKPHH) match the Histidine box-2 motif. A helical membrane pass occupies residues 186–206 (VFPLHKVVYLGLYVLVNVWTI). The short motif at 228–233 (HHTDHH) is the Histidine box-3 element. A Phosphoserine modification is found at Ser253. Residues 280 to 299 (FAENGCKGKKVGNGEFTKNK) form a disordered region.

It belongs to the sterol desaturase family. The cofactor is Fe cation.

It is found in the endoplasmic reticulum membrane. It carries out the reaction a Delta(7)-sterol + 2 Fe(II)-[cytochrome b5] + O2 + 2 H(+) = a Delta(5),Delta(7)-sterol + 2 Fe(III)-[cytochrome b5] + 2 H2O. The enzyme catalyses lathosterol + 2 Fe(II)-[cytochrome b5] + O2 + 2 H(+) = 7-dehydrocholesterol + 2 Fe(III)-[cytochrome b5] + 2 H2O. The catalysed reaction is 5alpha-cholesta-7,24-dien-3beta-ol + 2 Fe(II)-[cytochrome b5] + O2 + 2 H(+) = 7-dehydrodesmosterol + 2 Fe(III)-[cytochrome b5] + 2 H2O. It participates in steroid biosynthesis; cholesterol biosynthesis. Catalyzes the penultimate step of the biosynthesis of cholesterol, the dehydrogenation of lathosterol into 7-dehydrocholesterol (7-DHC). Cholesterol is the major sterol component in mammalian membranes and a precursor for bile acid and steroid hormone synthesis. In addition to its essential role in cholesterol biosynthesis, it also indirectly regulates ferroptosis through the production of 7-DHC. By diverting the spread of damage caused by peroxyl radicals from the phospholipid components to its sterol nucleus, 7-DHC prevents this form of cell death. This Mus musculus (Mouse) protein is Lathosterol oxidase.